Consider the following 366-residue polypeptide: uncharacterized protein (366 aa).

The segment at 199 to 267 (QKKQIEDEEK…QLKDAQAKRD (69 aa)) is disordered.

This is an uncharacterized protein from Haemophilus influenzae (strain ATCC 51907 / DSM 11121 / KW20 / Rd).